The chain runs to 350 residues: N-acetyl-gamma-glutamyl-phosphate reductase (350 aa).

Cysteine 154 is a catalytic residue.

The protein belongs to the NAGSA dehydrogenase family. Type 1 subfamily.

The protein localises to the cytoplasm. The enzyme catalyses N-acetyl-L-glutamate 5-semialdehyde + phosphate + NADP(+) = N-acetyl-L-glutamyl 5-phosphate + NADPH + H(+). The protein operates within amino-acid biosynthesis; L-arginine biosynthesis; N(2)-acetyl-L-ornithine from L-glutamate: step 3/4. Functionally, catalyzes the NADPH-dependent reduction of N-acetyl-5-glutamyl phosphate to yield N-acetyl-L-glutamate 5-semialdehyde. The chain is N-acetyl-gamma-glutamyl-phosphate reductase from Corynebacterium efficiens (strain DSM 44549 / YS-314 / AJ 12310 / JCM 11189 / NBRC 100395).